The following is a 384-amino-acid chain: DNA replication and repair protein RecF (384 aa).

43–50 is a binding site for ATP; sequence GENGSGKT.

This sequence belongs to the RecF family.

It is found in the cytoplasm. Functionally, the RecF protein is involved in DNA metabolism; it is required for DNA replication and normal SOS inducibility. RecF binds preferentially to single-stranded, linear DNA. It also seems to bind ATP. This chain is DNA replication and repair protein RecF, found in Brucella suis biovar 1 (strain 1330).